Consider the following 143-residue polypeptide: Transcriptional regulator MraZ (143 aa).

SpoVT-AbrB domains follow at residues Thr-5–Glu-47 and Ala-76–Ala-119.

Belongs to the MraZ family. Forms oligomers.

The protein localises to the cytoplasm. It localises to the nucleoid. In Kocuria rhizophila (strain ATCC 9341 / DSM 348 / NBRC 103217 / DC2201), this protein is Transcriptional regulator MraZ.